The primary structure comprises 92 residues: Small ribosomal subunit protein uS19 (92 aa).

It belongs to the universal ribosomal protein uS19 family.

Functionally, protein S19 forms a complex with S13 that binds strongly to the 16S ribosomal RNA. This is Small ribosomal subunit protein uS19 from Buchnera aphidicola subsp. Acyrthosiphon pisum (strain 5A).